A 246-amino-acid chain; its full sequence is Chaperone protein SefB (246 aa).

The first 24 residues, 1 to 24 (MYILNKFIRRTVIFFFFCYLPIAS), serve as a signal peptide directing secretion. Residues Cys124 and Cys155 are joined by a disulfide bond.

It belongs to the periplasmic pilus chaperone family.

Its subcellular location is the periplasm. Its function is as follows. Required for the biogenesis of the SefA (SEF14) fimbria. This is Chaperone protein SefB (sefB) from Salmonella enteritidis.